A 321-amino-acid chain; its full sequence is NADH-ubiquinone oxidoreductase chain 1 (321 aa).

The next 8 membrane-spanning stretches (helical) occupy residues 9-29 (ITNS…LTLL), 75-95 (ILFT…WAPM), 106-126 (LGLL…LWSG), 151-171 (TLGL…LMLF), 177-197 (HMWL…STLA), 219-239 (VEFS…NILF), 256-276 (PQLF…LFLW), and 297-317 (YLPL…ALCG).

Belongs to the complex I subunit 1 family.

The protein resides in the mitochondrion inner membrane. It catalyses the reaction a ubiquinone + NADH + 5 H(+)(in) = a ubiquinol + NAD(+) + 4 H(+)(out). Its function is as follows. Core subunit of the mitochondrial membrane respiratory chain NADH dehydrogenase (Complex I) that is believed to belong to the minimal assembly required for catalysis. Complex I functions in the transfer of electrons from NADH to the respiratory chain. The immediate electron acceptor for the enzyme is believed to be ubiquinone. The polypeptide is NADH-ubiquinone oxidoreductase chain 1 (MT-ND1) (Lycodon semicarinatus (Ryukyu odd-tooth snake)).